Reading from the N-terminus, the 555-residue chain is Formate--tetrahydrofolate ligase (555 aa).

65–72 (TPAGEGKT) serves as a coordination point for ATP.

Belongs to the formate--tetrahydrofolate ligase family.

The enzyme catalyses (6S)-5,6,7,8-tetrahydrofolate + formate + ATP = (6R)-10-formyltetrahydrofolate + ADP + phosphate. It functions in the pathway one-carbon metabolism; tetrahydrofolate interconversion. The polypeptide is Formate--tetrahydrofolate ligase (Syntrophomonas wolfei subsp. wolfei (strain DSM 2245B / Goettingen)).